We begin with the raw amino-acid sequence, 508 residues long: Steroid 17-alpha-hydroxylase/17,20 lyase (508 aa).

Asn202 is a substrate binding site. Position 442 (Cys442) interacts with heme.

Belongs to the cytochrome P450 family. Heme serves as cofactor.

The protein resides in the endoplasmic reticulum membrane. Its subcellular location is the microsome membrane. It catalyses the reaction a C21-steroid + reduced [NADPH--hemoprotein reductase] + O2 = a 17alpha-hydroxy-C21-steroid + oxidized [NADPH--hemoprotein reductase] + H2O + H(+). The catalysed reaction is progesterone + reduced [NADPH--hemoprotein reductase] + O2 = 17alpha-hydroxyprogesterone + oxidized [NADPH--hemoprotein reductase] + H2O + H(+). It carries out the reaction pregnenolone + reduced [NADPH--hemoprotein reductase] + O2 = 17alpha-hydroxypregnenolone + oxidized [NADPH--hemoprotein reductase] + H2O + H(+). The enzyme catalyses 17alpha-hydroxypregnenolone + reduced [NADPH--hemoprotein reductase] + O2 = 3beta-hydroxyandrost-5-en-17-one + acetate + oxidized [NADPH--hemoprotein reductase] + H2O + 2 H(+). It participates in steroid hormone biosynthesis. Its pathway is steroid biosynthesis; glucocorticoid biosynthesis. With respect to regulation, regulated predominantly by intracellular cAMP levels. The 17,20-lyase activity is stimulated by cytochrome b5, which acts as an allosteric effector increasing the Vmax of the lyase activity. A cytochrome P450 monooxygenase involved in corticoid and androgen biosynthesis. Catalyzes 17-alpha hydroxylation of C21 steroids, which is common for both pathways. A second oxidative step, required only for androgen synthesis, involves an acyl-carbon cleavage. Hydroxylates pregnenolone to form 17-alpha pregnenolone, followed by the cleavage of the C17-C20 bond to form dehydroepiandrosterone (DHEA). Has 17-alpha hydroxylase activity toward progesterone. The 17-alpha hydroxy intermediates, as part of adrenal glucocorticoids biosynthesis pathway, are precursors of cortisol. Mechanistically, uses molecular oxygen inserting one oxygen atom into a substrate, and reducing the second into a water molecule, with two electrons provided by NADPH via cytochrome P450 reductase (CPR; NADPH-ferrihemoprotein reductase). The protein is Steroid 17-alpha-hydroxylase/17,20 lyase (CYP17A1) of Papio hamadryas ursinus (Chacma baboon).